Reading from the N-terminus, the 262-residue chain is tRNA pseudouridine synthase A (262 aa).

Catalysis depends on D52, which acts as the Nucleophile. Y110 is a substrate binding site.

The protein belongs to the tRNA pseudouridine synthase TruA family. Homodimer.

It catalyses the reaction uridine(38/39/40) in tRNA = pseudouridine(38/39/40) in tRNA. Functionally, formation of pseudouridine at positions 38, 39 and 40 in the anticodon stem and loop of transfer RNAs. The polypeptide is tRNA pseudouridine synthase A (Chromobacterium violaceum (strain ATCC 12472 / DSM 30191 / JCM 1249 / CCUG 213 / NBRC 12614 / NCIMB 9131 / NCTC 9757 / MK)).